Consider the following 168-residue polypeptide: S-ribosylhomocysteine lyase (168 aa).

Fe cation contacts are provided by His-54, His-58, and Cys-128.

The protein belongs to the LuxS family. In terms of assembly, homodimer. The cofactor is Fe cation.

It catalyses the reaction S-(5-deoxy-D-ribos-5-yl)-L-homocysteine = (S)-4,5-dihydroxypentane-2,3-dione + L-homocysteine. Its function is as follows. Involved in the synthesis of autoinducer 2 (AI-2) which is secreted by bacteria and is used to communicate both the cell density and the metabolic potential of the environment. The regulation of gene expression in response to changes in cell density is called quorum sensing. Catalyzes the transformation of S-ribosylhomocysteine (RHC) to homocysteine (HC) and 4,5-dihydroxy-2,3-pentadione (DPD). The polypeptide is S-ribosylhomocysteine lyase (Histophilus somni (strain 2336) (Haemophilus somnus)).